A 616-amino-acid polypeptide reads, in one-letter code: Chaperone protein HscA (616 aa).

It belongs to the heat shock protein 70 family.

Chaperone involved in the maturation of iron-sulfur cluster-containing proteins. Has a low intrinsic ATPase activity which is markedly stimulated by HscB. Involved in the maturation of IscU. This chain is Chaperone protein HscA, found in Salmonella enteritidis PT4 (strain P125109).